The following is a 319-amino-acid chain: Histidinol-phosphate aminotransferase 1 (319 aa).

Residue Lys182 is modified to N6-(pyridoxal phosphate)lysine.

This sequence belongs to the class-II pyridoxal-phosphate-dependent aminotransferase family. Histidinol-phosphate aminotransferase subfamily. It depends on pyridoxal 5'-phosphate as a cofactor.

It catalyses the reaction L-histidinol phosphate + 2-oxoglutarate = 3-(imidazol-4-yl)-2-oxopropyl phosphate + L-glutamate. The protein operates within amino-acid biosynthesis; L-histidine biosynthesis; L-histidine from 5-phospho-alpha-D-ribose 1-diphosphate: step 7/9. This chain is Histidinol-phosphate aminotransferase 1 (hisC1), found in Archaeoglobus fulgidus (strain ATCC 49558 / DSM 4304 / JCM 9628 / NBRC 100126 / VC-16).